A 252-amino-acid chain; its full sequence is tRNA1(Val) (adenine(37)-N6)-methyltransferase (252 aa).

This sequence belongs to the methyltransferase superfamily. tRNA (adenine-N(6)-)-methyltransferase family.

Its subcellular location is the cytoplasm. The enzyme catalyses adenosine(37) in tRNA1(Val) + S-adenosyl-L-methionine = N(6)-methyladenosine(37) in tRNA1(Val) + S-adenosyl-L-homocysteine + H(+). Specifically methylates the adenine in position 37 of tRNA(1)(Val) (anticodon cmo5UAC). In Yersinia pseudotuberculosis serotype IB (strain PB1/+), this protein is tRNA1(Val) (adenine(37)-N6)-methyltransferase.